Reading from the N-terminus, the 380-residue chain is MKIIADENMPNAKVLFSHLGDVELVNGRTLTHEQVREADVLLVRSVTKVTKELLEGSSVRFVGSATIGVDHIDLDYLSKANIGFSSAPGCNAEAVADYVFSALSHLYLTKKINWLSKKIGVIGYGNVGKTVYTRFANMGCQVHVYDPIREKEGGSANFVSLDEILSCDVISLHAPLTHTGSYPTKGMIGRKELAKLSAGVTIISAGRGGVIDESALFDRHKQLNGNLHLVLDVWDGEPAINQKLIAIVDIATPHIAGYSKQGREKGTWMVYQALCQYLALDANVISKHDAISAGWLSFVNVSAEEPQEEMLARSMHAIYDVSRDDIRLRFKYRENKEKNVFDWLRKHYVERDEFNTCIIGVSSSDASNLMSAAGFSVDNK.

2 residues coordinate substrate: Ser45 and Thr66. Residue Asp146 participates in NAD(+) binding. Arg207 is an active-site residue. Asp232 lines the NAD(+) pocket. Glu237 is a catalytic residue. The active-site Proton donor is His254. Residue Gly257 participates in NAD(+) binding. Substrate is bound at residue Tyr258.

The protein belongs to the D-isomer specific 2-hydroxyacid dehydrogenase family. PdxB subfamily. In terms of assembly, homodimer.

It is found in the cytoplasm. It catalyses the reaction 4-phospho-D-erythronate + NAD(+) = (R)-3-hydroxy-2-oxo-4-phosphooxybutanoate + NADH + H(+). The protein operates within cofactor biosynthesis; pyridoxine 5'-phosphate biosynthesis; pyridoxine 5'-phosphate from D-erythrose 4-phosphate: step 2/5. Catalyzes the oxidation of erythronate-4-phosphate to 3-hydroxy-2-oxo-4-phosphonooxybutanoate. This Marinomonas sp. (strain MWYL1) protein is Erythronate-4-phosphate dehydrogenase.